The primary structure comprises 350 residues: Transmembrane protein 115 (350 aa).

Residues 1 to 19 (MQRALPGARQHLGAILASA) are Cytoplasmic-facing. The tract at residues 1 to 205 (MQRALPGARQ…FGLLSSWVYL (205 aa)) is mediates homooligomerization. The helical transmembrane segment at 20–40 (SVVVKALCAVVLFLYLLSFAV) threads the bilayer. Residues 41–97 (DTGCLAVTPGYLFPPNFWIWTLATHGLMEQHVWDVAISLATVVVAGRLLEPLWGALE) lie on the Lumenal side of the membrane. The chain crosses the membrane as a helical span at residues 98 to 118 (LLIFFSVVNVSVGLLGALAYL). The Cytoplasmic portion of the chain corresponds to 119-126 (LTYMASFN). Residues 127–147 (LVYLFTIRIHGALGFLGGVLV) traverse the membrane as a helical segment. Over 148-165 (ALKQTMGDCVVLRVPQVR) the chain is Lumenal. A helical membrane pass occupies residues 166 to 186 (VSVVPMLLLALLLLLRLATLL). Topologically, residues 187–350 (QSPALASYGF…LITLETAPLL (164 aa)) are cytoplasmic. The mediates localization to the Golgi stretch occupies residues 206–229 (RFYQRHSRGRGDMADHFAFATFFP). The segment at 299-350 (EDQSAWPSMDDDEEEAGAKTDSPLPLEEASTPPGKVTVPESSLITLETAPLL) is disordered. Thr-329 carries the post-translational modification Phosphothreonine.

Belongs to the TMEM115 family. Homooligomer. Interacts with COPB1. May interact with LMAN1. Interacts with the COG complex; probably through COG3.

It localises to the golgi apparatus. Its subcellular location is the golgi stack membrane. Functionally, may play a role in retrograde transport of proteins from the Golgi to the endoplasmic reticulum. May indirectly play a role in protein glycosylation in the Golgi. In Mus musculus (Mouse), this protein is Transmembrane protein 115.